Consider the following 1623-residue polypeptide: Histone-lysine N-methyltransferase set-9 (1623 aa).

Disordered regions lie at residues 1–102, 112–131, 198–227, 448–600, and 645–781; these read MADG…APQQ, AADA…RPTE, EDAV…SVAS, QRPG…VLRP, and TGQS…DEAA. The span at 62–71 shows a compositional bias: basic and acidic residues; the sequence is HQMENQEFYH. Positions 77–100 are enriched in low complexity; the sequence is EPQQIPQIPVFQPAAYNPPNYVAP. A compositionally biased stretch (polar residues) spans 206–227; sequence PGTQYRRNQQAGGGLPSTSVAS. A compositionally biased stretch (basic and acidic residues) spans 554-573; the sequence is MTQEEKNAHFARLTTDKEKP. A compositionally biased stretch (pro residues) spans 587 to 597; sequence PHVPPPPPPLV. Over residues 645–669 the composition is skewed to polar residues; sequence TGQSGSSAAARQRTVSGSAARAQTY. Over residues 723–733 the composition is skewed to basic residues; sequence HRPRGRPKGTR. A compositionally biased stretch (acidic residues) spans 772–781; the sequence is SESEGIDEAA. Residues 786-834 form a PHD-type zinc finger; sequence TMRCHCGMDHGDGDTIECEGCKTWQHMACMGLTLKSNTSKYKCEMCLPR. Positions 857 to 895 are disordered; that stretch reads AARKQKRKSEPVEQKQKSSQPSTSRKSAPMALQQPAEPR. The span at 873 to 882 shows a compositional bias: polar residues; the sequence is KSSQPSTSRK. The SET domain occupies 965–1056; it reads MSSEVKRQPG…RNTEVTLPFD (92 aa). Basic and acidic residues-rich tracts occupy residues 1089–1157 and 1172–1194; these read AERH…KKME and AREE…EGKR. 2 disordered regions span residues 1089-1318 and 1356-1623; these read AERH…NVAP and LLAG…TRWN. Residues 1093–1201 are a coiled coil; sequence RAMDHKKQEA…GKRKEARRRS (109 aa). Over residues 1242–1252 the composition is skewed to polar residues; it reads TTQPSTSSFAT. Residues 1282-1293 are compositionally biased toward low complexity; sequence ATTVATPKATTA. Positions 1364–1401 form a coiled coil; the sequence is FSEVRAQIEEENRMKERSRKREAKKKAVEKEKKEHRKE. 4 stretches are compositionally biased toward basic and acidic residues: residues 1365–1378, 1388–1406, 1413–1429, and 1447–1464; these read SEVR…NRMK, KKAV…KKTN, KSEK…EKKP, and KKTE…ESSS. Residues 1533–1544 are compositionally biased toward polar residues; the sequence is SSSNTAPTTTIA.

The protein belongs to the class V-like SAM-binding methyltransferase superfamily. Predominantly expressed in the germline (at protein level).

Its subcellular location is the nucleus. It catalyses the reaction L-lysyl-[histone] + S-adenosyl-L-methionine = N(6)-methyl-L-lysyl-[histone] + S-adenosyl-L-homocysteine + H(+). Histone methyltransferase. Might play a role in transcriptional regulation. Together with set-26, negatively regulates lifespan in a germline-independent, partially daf-16-dependent fashion. Together with set-26, plays a role in germline development and maintenance and might play a role in the restriction of the trimethylation mark on histone H3 'Lys-4'(H3K4me3) to target genes specifically in the germline. The sequence is that of Histone-lysine N-methyltransferase set-9 from Caenorhabditis elegans.